Here is a 347-residue protein sequence, read N- to C-terminus: UDP-N-acetylenolpyruvoylglucosamine reductase (347 aa).

An FAD-binding PCMH-type domain is found at 16-187; that stretch reads AIEQCSHYLV…IAVGLKLPKT (172 aa). Arg-163 is an active-site residue. The active-site Proton donor is the Ser-233. Glu-328 is an active-site residue.

The protein belongs to the MurB family. It depends on FAD as a cofactor.

It is found in the cytoplasm. The enzyme catalyses UDP-N-acetyl-alpha-D-muramate + NADP(+) = UDP-N-acetyl-3-O-(1-carboxyvinyl)-alpha-D-glucosamine + NADPH + H(+). The protein operates within cell wall biogenesis; peptidoglycan biosynthesis. Its function is as follows. Cell wall formation. The polypeptide is UDP-N-acetylenolpyruvoylglucosamine reductase (Vibrio vulnificus (strain CMCP6)).